The sequence spans 392 residues: MGLLDGNPANETSLVLLLFADFSSMLGCMAVLIGFWRLKLLRNHVTKVIACFCATSFCKDFPSTILTLTNTAVNGGFPCYLYAIVITYGSFACWLWTLCLAISIYMLIVKREPEPERFEKYYYLLCWGLPLISTIVMLAKNTVQFVGNWCWIGVSFTGYRFGLFYGPFLFIWAISAVLVGLTSRYTYVVIHNGVSDNKEKHLTYQFKLINYIIVFLVCWVFAVVNRIVNGLNMFPPALNILHTYLSVSHGFWASVTFIYNNPLMWRYFGAKILTVFTFFGYFTDVQKKLEKNKNNNNPSPYSSSRGTSGKTMGGHPTGDDVQCSSDMEQCSLERHPNMVNNQQNLNNNYGLQQNYNDEGSSSSSLSSSDEEKQTVEMQNIQISTSTNGQGNN.

Residues 1–13 (MGLLDGNPANETS) are Extracellular-facing. Asparagine 10 is a glycosylation site (N-linked (GlcNAc...) asparagine). The chain crosses the membrane as a helical span at residues 14 to 33 (LVLLLFADFSSMLGCMAVLI). Over 34-47 (GFWRLKLLRNHVTK) the chain is Cytoplasmic. A helical membrane pass occupies residues 48–68 (VIACFCATSFCKDFPSTILTL). At 69 to 83 (TNTAVNGGFPCYLYA) the chain is on the extracellular side. A helical membrane pass occupies residues 84–109 (IVITYGSFACWLWTLCLAISIYMLIV). The Cytoplasmic segment spans residues 110 to 120 (KREPEPERFEK). The chain crosses the membrane as a helical span at residues 121–139 (YYYLLCWGLPLISTIVMLA). The Extracellular portion of the chain corresponds to 140-162 (KNTVQFVGNWCWIGVSFTGYRFG). The chain crosses the membrane as a helical span at residues 163-181 (LFYGPFLFIWAISAVLVGL). The Cytoplasmic portion of the chain corresponds to 182 to 205 (TSRYTYVVIHNGVSDNKEKHLTYQ). The chain crosses the membrane as a helical span at residues 206-224 (FKLINYIIVFLVCWVFAVV). At 225–235 (NRIVNGLNMFP) the chain is on the extracellular side. The chain crosses the membrane as a helical span at residues 236 to 260 (PALNILHTYLSVSHGFWASVTFIYN). At 261-392 (NPLMWRYFGA…STSTNGQGNN (132 aa)) the chain is on the cytoplasmic side. 2 disordered regions span residues 292–324 (NKNNNNPSPYSSSRGTSGKTMGGHPTGDDVQCS) and 339–392 (VNNQ…QGNN). A compositionally biased stretch (polar residues) spans 298–310 (PSPYSSSRGTSGK). Phosphoserine occurs at positions 299, 302, 303, 304, 308, 360, 361, 362, 363, 364, 366, 367, and 368. The segment covering 340 to 367 (NNQQNLNNNYGLQQNYNDEGSSSSSLSS) has biased composition (low complexity). Positions 375–392 (VEMQNIQISTSTNGQGNN) are enriched in polar residues.

Belongs to the G-protein coupled receptor 5 family. C-terminal Ser or Thr residues may be phosphorylated.

It is found in the membrane. In terms of biological role, receptor for cAMP. Coordinates the aggregation of individual cells into a multicellular organism and regulates the expression of a large number of developmentally regulated genes. The activity of this receptor is mediated by G proteins. The chain is Cyclic AMP receptor 1 (carA-1) from Dictyostelium discoideum (Social amoeba).